We begin with the raw amino-acid sequence, 37 residues long: Large ribosomal subunit protein bL36 (37 aa).

It belongs to the bacterial ribosomal protein bL36 family.

The sequence is that of Large ribosomal subunit protein bL36 from Persephonella marina (strain DSM 14350 / EX-H1).